Consider the following 383-residue polypeptide: Outer membrane protein Omp-EA (383 aa).

The first 21 residues, Met-1–Ala-21, serve as a signal peptide directing secretion. Topologically, residues Ala-22 to Asn-30 are periplasmic. Residues Lys-31–Ser-45 traverse the membrane as a beta stranded segment. Topologically, residues Asp-46–Ser-58 are extracellular. Residues Tyr-59 to Ile-70 traverse the membrane as a beta stranded segment. Residues Asn-71–Leu-74 are Periplasmic-facing. A beta stranded transmembrane segment spans residues Thr-75–Leu-86. Residues Ser-87–Lys-100 lie on the Extracellular side of the membrane. A beta stranded transmembrane segment spans residues Thr-101 to Lys-109. The Periplasmic portion of the chain corresponds to Leu-110 to Asp-112. The chain crosses the membrane as a beta stranded span at residues Tyr-113–Tyr-122. Over Gly-123–Asn-155 the chain is Extracellular. The beta stranded transmembrane segment at Ser-156 to Asp-164 threads the bilayer. Topologically, residues Phe-165–Gly-171 are periplasmic. The beta stranded transmembrane segment at Leu-172–Tyr-178 threads the bilayer. Residues Gln-179–Tyr-198 lie on the Extracellular side of the membrane. The chain crosses the membrane as a beta stranded span at residues Gly-199–Ile-206. Residues Val-207–Gly-209 are Periplasmic-facing. Residues Leu-210–Ser-219 form a beta stranded membrane-spanning segment. Over Asn-220 to Arg-243 the chain is Extracellular. Residues Ala-244–Lys-252 form a beta stranded membrane-spanning segment. Over Tyr-253–Val-258 the chain is Periplasmic. The chain crosses the membrane as a beta stranded span at residues Tyr-259–Arg-268. The Extracellular segment spans residues Asn-269–Val-296. The beta stranded transmembrane segment at Gln-297 to Phe-307 threads the bilayer. The Periplasmic segment spans residues Asp-308–Gly-310. Residues Leu-311 to Gln-319 traverse the membrane as a beta stranded segment. Topologically, residues Thr-320 to Ser-335 are extracellular. A beta stranded membrane pass occupies residues Lys-336 to Phe-346. Over Asn-347 to Ser-351 the chain is Periplasmic. Residues Ala-352–Leu-361 traverse the membrane as a beta stranded segment. Residues Ser-362–Asp-372 are Extracellular-facing. The chain crosses the membrane as a beta stranded span at residues Asp-373–Phe-383.

Belongs to the Gram-negative porin family. As to quaternary structure, homotrimer.

It is found in the cell outer membrane. In terms of biological role, may play an important role in maintaining pathogenicity in plants. This is Outer membrane protein Omp-EA (omp-EA) from Erwinia amylovora (Fire blight bacteria).